Consider the following 489-residue polypeptide: Putative general secretion pathway protein A (489 aa).

ATP is bound at residue 26-33 (GEAGSGKT). The helical transmembrane segment at 237-257 (MQLAVVMSGTIIALTCGWLLL) threads the bilayer.

This sequence belongs to the ExeA family.

Its subcellular location is the cell membrane. May play a regulatory role under conditions of derepressed gsp gene expression. This is Putative general secretion pathway protein A (gspA) from Escherichia coli (strain K12).